The sequence spans 115 residues: Large ribosomal subunit protein mL60 (115 aa).

A mitochondrion-targeting transit peptide spans 1–23 (MLGAFNSTLARFGGLVHKVPWRL). The segment at 88–115 (AGLQGFRKGVHKSPKWTRSTNRVNPTGF) is disordered. The span at 103-115 (WTRSTNRVNPTGF) shows a compositional bias: polar residues.

This sequence belongs to the mitochondrion-specific ribosomal protein mL60 family. As to quaternary structure, component of the mitochondrial large ribosomal subunit (mt-LSU). Mature yeast 74S mitochondrial ribosomes consist of a small (37S) and a large (54S) subunit. The 37S small subunit contains a 15S ribosomal RNA (15S mt-rRNA) and at least 32 different proteins. The 54S large subunit contains a 21S rRNA (21S mt-rRNA) and at least 45 different proteins.

The protein localises to the mitochondrion. Functionally, component of the mitochondrial ribosome (mitoribosome), a dedicated translation machinery responsible for the synthesis of mitochondrial genome-encoded proteins, including at least some of the essential transmembrane subunits of the mitochondrial respiratory chain. The mitoribosomes are attached to the mitochondrial inner membrane and translation products are cotranslationally integrated into the membrane. This chain is Large ribosomal subunit protein mL60 (mrpl31), found in Schizosaccharomyces pombe (strain 972 / ATCC 24843) (Fission yeast).